Here is a 232-residue protein sequence, read N- to C-terminus: Histone H1A (232 aa).

Positions 1–18 are enriched in low complexity; it reads MSDPAVEVTPAVPVASPA. 2 disordered regions span residues 1 to 42 and 98 to 232; these read MSDP…THLP and LQTK…AKKA. An H15 domain is found at 39–113; sequence THLPVSDMVV…GASGSFKLPA (75 aa). 4 stretches are compositionally biased toward basic residues: residues 131–141, 147–173, 181–214, and 222–232; these read KPKKAAAPKPK, KVKK…KTTK, AAKK…KAKK, and KAAKKPAAKKA.

The protein belongs to the histone H1/H5 family.

It localises to the nucleus. The protein localises to the chromosome. Functionally, histones H1 are necessary for the condensation of nucleosome chains into higher-order structures. This chain is Histone H1A, found in Chironomus tentans (Midge).